The following is a 295-amino-acid chain: Gamma-glutamyl-L-1-hydroxyisopropylamide hydrolase (295 aa).

The 217-residue stretch at 5-221 folds into the Glutamine amidotransferase type-1 domain; that stretch reads RILICDGNTE…LRESARSLVE (217 aa). The Nucleophile role is filled by Cys-104. Residues His-200 and Glu-202 contribute to the active site.

The enzyme catalyses gamma-L-glutamyl-L-alaninol + H2O = L-alaninol + L-glutamate. Its function is as follows. Involved in the degradation of isopropylamine, which is a constituent of the herbicides atrazine. Catalyzes the hydrolysis of gamma-glutamyl-L-alaninol (GALO) to L-alaninol and L-glutamate. It can also uses gamma-glutamyl-isopropylamide, gamma-glutamyl-ethylamide, L-glutamine, and gamma-glutamyl-p-nitroanilide. The chain is Gamma-glutamyl-L-1-hydroxyisopropylamide hydrolase (ipuF) from Pseudomonas sp.